The following is an 814-amino-acid chain: Flagellar radial spoke protein 1 (814 aa).

Position 243 is an asymmetric dimethylarginine (Arg243). The interval 283 to 346 (VQSISTGNRE…PPPPAPKVDP (64 aa)) is disordered. Over residues 303-329 (PEEDEEEEKEEEKEEPEEGEEGEEGEG) the composition is skewed to acidic residues. An Asymmetric dimethylarginine modification is found at Arg428. MORN repeat units lie at residues 577–597 (YFGS…FATG), 600–622 (YAGE…DGGT), 623–645 (YVGE…DGSV), 646–662 (YTGS…GVYW), 671–685 (GEWK…GTYE), and 691–707 (FEGE…ATYT). Positions 739–769 (GIPPGSGDEPQLDEEGQPIEDTDKPPLPAHP) are disordered. Over residues 748–758 (PQLDEEGQPIE) the composition is skewed to acidic residues.

Asymmetrically dimethylated at Arg-243 and Arg-428 during flagellum resorption. Probably methylated by PRMT1.

Its subcellular location is the cytoplasm. The protein resides in the cytoskeleton. It localises to the flagellum axoneme. Its function is as follows. Flagellar radial spokes contribute to the regulation of dynein arm activity and thus the pattern of flagellar bending. They consist of a thin stalk, which is attached to the a subfiber of the outer doublet microtubule, and a bulbous head, which is attached to the stalk and appears to interact with the projections from the central pair of microtubules. The sequence is that of Flagellar radial spoke protein 1 from Chlamydomonas reinhardtii (Chlamydomonas smithii).